A 225-amino-acid chain; its full sequence is NAD(P)H-quinone oxidoreductase subunit K, chloroplastic (225 aa).

[4Fe-4S] cluster-binding residues include Cys-43, Cys-44, Cys-108, and Cys-139.

It belongs to the complex I 20 kDa subunit family. As to quaternary structure, NDH is composed of at least 16 different subunits, 5 of which are encoded in the nucleus. [4Fe-4S] cluster serves as cofactor.

Its subcellular location is the plastid. The protein localises to the chloroplast thylakoid membrane. The enzyme catalyses a plastoquinone + NADH + (n+1) H(+)(in) = a plastoquinol + NAD(+) + n H(+)(out). It catalyses the reaction a plastoquinone + NADPH + (n+1) H(+)(in) = a plastoquinol + NADP(+) + n H(+)(out). NDH shuttles electrons from NAD(P)H:plastoquinone, via FMN and iron-sulfur (Fe-S) centers, to quinones in the photosynthetic chain and possibly in a chloroplast respiratory chain. The immediate electron acceptor for the enzyme in this species is believed to be plastoquinone. Couples the redox reaction to proton translocation, and thus conserves the redox energy in a proton gradient. The sequence is that of NAD(P)H-quinone oxidoreductase subunit K, chloroplastic from Fagopyrum esculentum subsp. ancestrale (Wild buckwheat).